Here is a 102-residue protein sequence, read N- to C-terminus: Complement inhibitor RaCI6 (102 aa).

A signal peptide spans 1–24 (MAALNGLVLLLLTISAMFISECYS). 2 cysteine pairs are disulfide-bonded: Cys-37-Cys-61 and Cys-42-Cys-63.

The protein belongs to the RaCI family. In terms of tissue distribution, expressed in salivary glands.

The protein resides in the secreted. Functionally, complement inhibitor. Prevents complement-mediated C5 activation by binding to C5. Binds C5 at a different binding site than the other tick complement inhibitors OmCI and CirpT1, and the drug eculizumab. This Dermacentor andersoni (Rocky mountain wood tick) protein is Complement inhibitor RaCI6.